Reading from the N-terminus, the 239-residue chain is Serine protease SplD (239 aa).

Residues 1 to 36 form the signal peptide; it reads MNKNIIIKSIAALTILTSITGVGTTVVDGIQQTAKA. Catalysis depends on charge relay system residues His75, Asp114, and Ser192.

It belongs to the peptidase S1B family.

It is found in the secreted. The chain is Serine protease SplD (splD) from Staphylococcus aureus (strain COL).